The primary structure comprises 570 residues: Probable diguanylate cyclase DgcQ (570 aa).

2 helical membrane-spanning segments follow: residues 20–40 (FGPG…STLL) and 360–380 (IALT…WGVI). The GGDEF domain occupies 428-563 (QPFSVIQLDL…GRNRICASDA (136 aa)). Mg(2+) is bound at residue aspartate 436. Residues asparagine 444, histidine 449, and aspartate 453 each coordinate substrate. Glutamate 479 lines the Mg(2+) pocket. Glutamate 479 functions as the Proton acceptor in the catalytic mechanism.

Homodimer. Mg(2+) is required as a cofactor.

The protein resides in the cell inner membrane. It catalyses the reaction 2 GTP = 3',3'-c-di-GMP + 2 diphosphate. It functions in the pathway glycan metabolism; bacterial cellulose biosynthesis. The protein operates within purine metabolism; 3',5'-cyclic di-GMP biosynthesis. Its function is as follows. Catalyzes the synthesis of cyclic-di-GMP (c-di-GMP) via the condensation of 2 GTP molecules. Cyclic-di-GMP is a second messenger which controls cell surface-associated traits in bacteria. Involved in the regulation of cellulose production. This chain is Probable diguanylate cyclase DgcQ, found in Salmonella choleraesuis (strain SC-B67).